The primary structure comprises 103 residues: Small ribosomal subunit protein uS10 (103 aa).

Belongs to the universal ribosomal protein uS10 family. As to quaternary structure, part of the 30S ribosomal subunit.

Its function is as follows. Involved in the binding of tRNA to the ribosomes. The chain is Small ribosomal subunit protein uS10 from Stutzerimonas stutzeri (strain A1501) (Pseudomonas stutzeri).